Consider the following 413-residue polypeptide: MPSDDRFADAVKPALEALLSDLQHTTEVLRRAHISDRRSQSRDDFEQSYDLQGNLNTQSVSNGNITTSPYKRRSSEGKDYSKSQERIYENESRLNPPVYSRPSVQSLLSQVEEPPIRASSSRKSLGPPSQAQSYSDVRSNGRSPSRDPLHSDSMIGTMNGELSSKHGVNTIPKGDCAACGKPIIGQVVIALGKMWHPEHYTCCECGAELGQRPFFERNGRAFCEEDYHNQFSPKCQGCHRAITDRCVSVMNKNFHIECFTCAECNQPFGEDGFHEKNGQTYCKRDFFRLFAPKCNGCSQPITSNFITALGTHWHPDCFVCQHCGVSFNGASFFEHNGAPLCERHYHESRGSICSQCRGAINGRCVAAMGRKFHPEHFRCSYCNHQLTKGTFKEVDRRPFCHKCYNNTYALTPA.

A compositionally biased stretch (basic and acidic residues) spans 33–45 (HISDRRSQSRDDF). Residues 33–157 (HISDRRSQSR…PLHSDSMIGT (125 aa)) are disordered. The span at 49-69 (YDLQGNLNTQSVSNGNITTSP) shows a compositional bias: polar residues. The segment covering 73 to 92 (RSSEGKDYSKSQERIYENES) has biased composition (basic and acidic residues). The segment covering 118–143 (ASSSRKSLGPPSQAQSYSDVRSNGRS) has biased composition (polar residues). LIM zinc-binding domains follow at residues 174–232 (GDCA…NQFS), 233–292 (PKCQ…LFAP), 293–350 (KCNG…ESRG), and 351–410 (SICS…TYAL).

It belongs to the paxillin family. As to expression, isoform a: Expressed in all 95 body wall muscle cells as well as in the pharyngeal muscle cells (at protein level). Isoform c: Expressed in the body wall muscle cells and in the pharyngeal muscle cells.

It localises to the cell junction. It is found in the adherens junction. The protein localises to the cell membrane. Its subcellular location is the cytoplasm. The protein resides in the myofibril. It localises to the sarcomere. It is found in the m line. The protein localises to the cell projection. Its subcellular location is the podosome. Its function is as follows. Required for myofilament organization of the pharyngeal sarcomeres and for pharyngeal muscle contractions and hence for pharyngeal pumping. Together with lin-8, might be required for myofilament organization in the body wall muscles. This Caenorhabditis elegans protein is Paxillin homolog 1 (pxl-1).